The following is a 339-amino-acid chain: Phenylalanine--tRNA ligase alpha subunit (339 aa).

Glu-254 contributes to the Mg(2+) binding site.

This sequence belongs to the class-II aminoacyl-tRNA synthetase family. Phe-tRNA synthetase alpha subunit type 1 subfamily. As to quaternary structure, tetramer of two alpha and two beta subunits. It depends on Mg(2+) as a cofactor.

It localises to the cytoplasm. The catalysed reaction is tRNA(Phe) + L-phenylalanine + ATP = L-phenylalanyl-tRNA(Phe) + AMP + diphosphate + H(+). This chain is Phenylalanine--tRNA ligase alpha subunit, found in Lachnoclostridium phytofermentans (strain ATCC 700394 / DSM 18823 / ISDg) (Clostridium phytofermentans).